We begin with the raw amino-acid sequence, 424 residues long: Choline-phosphate cytidylyltransferase (424 aa).

Residues 1-70 (MANPTTGKSS…RKRRRLTKEF (70 aa)) are disordered. Positions 14–24 (KLSNSSLSNLF) are enriched in low complexity. S16 carries the post-translational modification Phosphoserine. Acidic residues predominate over residues 35-44 (ETEEQDNEDK). The segment covering 45-55 (DESKNQDENKD) has biased composition (basic and acidic residues). The residue at position 59 (T59) is a Phosphothreonine. Residues 111–119 (VFDLFHLGH) and K149 each bind CTP. 2 residues coordinate substrate: K149 and W178. CTP contacts are provided by residues 195-196 (HD), Y200, and 223-227 (RTNGV). Residue S346 is modified to Phosphoserine. A disordered region spans residues 348 to 424 (ATEFANEFTG…LTQKKKQSAN (77 aa)). The span at 381-398 (NSNNTNTNSDSDSNTNST) shows a compositional bias: low complexity. S401 carries the post-translational modification Phosphoserine; by CK2.

The protein belongs to the cytidylyltransferase family.

The protein resides in the membrane. It catalyses the reaction phosphocholine + CTP + H(+) = CDP-choline + diphosphate. The protein operates within phospholipid metabolism; phosphatidylcholine biosynthesis; phosphatidylcholine from phosphocholine: step 1/2. Functionally, catalyzes the key rate-limiting step in the CDP-choline pathway for phosphatidylcholine biosynthesis. This chain is Choline-phosphate cytidylyltransferase (PCT1), found in Saccharomyces cerevisiae (strain ATCC 204508 / S288c) (Baker's yeast).